The primary structure comprises 211 residues: Regulator of G-protein signaling 2 (211 aa).

2 disordered regions span residues 14 to 33 and 49 to 71; these read GPMD…REKM and LQNS…TFIK. Positions 32–66 are necessary for membrane association; sequence KMKRTLLKDWKSRLSYFLQNSSSPGKPKTGKKSKQ. The necessary to inhibit protein synthesis stretch occupies residues 79 to 116; that stretch reads LWSEAFDELLASKYGLAAFRAFLKSEFCEENIEFWLAC. The RGS domain occupies 83–199; the sequence is AFDELLASKY…LESEFYQDLC (117 aa).

Interacts with GNAQ. Does not interact with GNAI1 and GNAI3. Interacts with EIF2B5. Interacts with PRKG1 (isoform alpha). Post-translationally, phosphorylated by protein kinase C. Phosphorylation by PRKG1 leads to activation of RGS2 activity.

Its subcellular location is the cell membrane. It localises to the cytoplasm. The protein localises to the nucleus. The protein resides in the nucleolus. Its function is as follows. Regulates G protein-coupled receptor signaling cascades. Inhibits signal transduction by increasing the GTPase activity of G protein alpha subunits, thereby driving them into their inactive GDP-bound form. It is involved in the negative regulation of the angiotensin-activated signaling pathway. Plays a role in the regulation of blood pressure in response to signaling via G protein-coupled receptors and GNAQ. Plays a role in regulating the constriction and relaxation of vascular smooth muscle. Binds EIF2B5 and blocks its activity, thereby inhibiting the translation of mRNA into protein. In Bos taurus (Bovine), this protein is Regulator of G-protein signaling 2 (RGS2).